Reading from the N-terminus, the 376-residue chain is Glutamate 5-kinase (376 aa).

Lysine 23 contributes to the ATP binding site. Substrate contacts are provided by serine 63, aspartate 150, and asparagine 162. ATP is bound by residues 182–183 and 222–228; these read SD and TGGMASK. One can recognise a PUA domain in the interval 284–358; it reads GGALRIDAGA…GKQTAQLPEG (75 aa).

Belongs to the glutamate 5-kinase family.

The protein resides in the cytoplasm. The enzyme catalyses L-glutamate + ATP = L-glutamyl 5-phosphate + ADP. It functions in the pathway amino-acid biosynthesis; L-proline biosynthesis; L-glutamate 5-semialdehyde from L-glutamate: step 1/2. Functionally, catalyzes the transfer of a phosphate group to glutamate to form L-glutamate 5-phosphate. This is Glutamate 5-kinase from Corynebacterium diphtheriae (strain ATCC 700971 / NCTC 13129 / Biotype gravis).